Consider the following 38-residue polypeptide: Large ribosomal subunit protein bL36 (38 aa).

This sequence belongs to the bacterial ribosomal protein bL36 family.

This chain is Large ribosomal subunit protein bL36, found in Flavobacterium psychrophilum (strain ATCC 49511 / DSM 21280 / CIP 103535 / JIP02/86).